Here is a 101-residue protein sequence, read N- to C-terminus: Small ribosomal subunit protein bS18c (101 aa).

It belongs to the bacterial ribosomal protein bS18 family. As to quaternary structure, part of the 30S ribosomal subunit.

The protein resides in the plastid. It is found in the chloroplast. This Arabidopsis thaliana (Mouse-ear cress) protein is Small ribosomal subunit protein bS18c (rps18).